A 159-amino-acid polypeptide reads, in one-letter code: 2-C-methyl-D-erythritol 2,4-cyclodiphosphate synthase (159 aa).

The a divalent metal cation site is built by aspartate 10 and histidine 12. Residues 10 to 12 and 37 to 38 each bind 4-CDP-2-C-methyl-D-erythritol 2-phosphate; these read DVH and HS. Histidine 45 lines the a divalent metal cation pocket. Residues 59–61, 64–68, 103–109, 135–138, phenylalanine 142, and arginine 145 each bind 4-CDP-2-C-methyl-D-erythritol 2-phosphate; these read DIG, FLDTD, AQAPKML, and TTTE.

Belongs to the IspF family. Homotrimer. A divalent metal cation serves as cofactor.

The catalysed reaction is 4-CDP-2-C-methyl-D-erythritol 2-phosphate = 2-C-methyl-D-erythritol 2,4-cyclic diphosphate + CMP. It functions in the pathway isoprenoid biosynthesis; isopentenyl diphosphate biosynthesis via DXP pathway; isopentenyl diphosphate from 1-deoxy-D-xylulose 5-phosphate: step 4/6. Its function is as follows. Involved in the biosynthesis of isopentenyl diphosphate (IPP) and dimethylallyl diphosphate (DMAPP), two major building blocks of isoprenoid compounds. Catalyzes the conversion of 4-diphosphocytidyl-2-C-methyl-D-erythritol 2-phosphate (CDP-ME2P) to 2-C-methyl-D-erythritol 2,4-cyclodiphosphate (ME-CPP) with a corresponding release of cytidine 5-monophosphate (CMP). The sequence is that of 2-C-methyl-D-erythritol 2,4-cyclodiphosphate synthase from Francisella tularensis subsp. holarctica (strain OSU18).